The chain runs to 979 residues: Translation initiation factor IF-2 (979 aa).

The disordered stretch occupies residues 68–392; that stretch reads VKQKQGTPAS…SRAAQDAMEL (325 aa). Basic and acidic residues-rich tracts occupy residues 102–179, 217–229, and 260–273; these read QDMR…KPEE, EMEK…EVFR, and TKED…DADG. A compositionally biased stretch (polar residues) spans 309-326; that stretch reads PSGNKNNNRPAQQQSNAS. Basic and acidic residues predominate over residues 347 to 356; sequence DVQRQVKETL. The region spanning 478–646 is the tr-type G domain; the sequence is ARPPIVTVMG…KVLLEADILE (169 aa). Positions 487–494 are G1; that stretch reads GHVDHGKT. 487–494 serves as a coordination point for GTP; it reads GHVDHGKT. The interval 512–516 is G2; that stretch reads GITQH. Positions 534–537 are G3; the sequence is DTPG. GTP is bound by residues 534 to 538 and 588 to 591; these read DTPGH and NKID. The segment at 588–591 is G4; the sequence is NKID. The interval 624 to 626 is G5; that stretch reads SAK.

Belongs to the TRAFAC class translation factor GTPase superfamily. Classic translation factor GTPase family. IF-2 subfamily.

It is found in the cytoplasm. One of the essential components for the initiation of protein synthesis. Protects formylmethionyl-tRNA from spontaneous hydrolysis and promotes its binding to the 30S ribosomal subunits. Also involved in the hydrolysis of GTP during the formation of the 70S ribosomal complex. The chain is Translation initiation factor IF-2 from Porphyromonas gingivalis (strain ATCC 33277 / DSM 20709 / CIP 103683 / JCM 12257 / NCTC 11834 / 2561).